A 330-amino-acid chain; its full sequence is Aspartate--ammonia ligase (330 aa).

This sequence belongs to the class-II aminoacyl-tRNA synthetase family. AsnA subfamily.

The protein resides in the cytoplasm. It carries out the reaction L-aspartate + NH4(+) + ATP = L-asparagine + AMP + diphosphate + H(+). Its pathway is amino-acid biosynthesis; L-asparagine biosynthesis; L-asparagine from L-aspartate (ammonia route): step 1/1. The polypeptide is Aspartate--ammonia ligase (Escherichia coli O139:H28 (strain E24377A / ETEC)).